A 422-amino-acid polypeptide reads, in one-letter code: Probable tRNA pseudouridine synthase D (422 aa).

The active-site Nucleophile is the D83. Residues 164 to 386 (GFPNYFGSQR…AGGRRELLIK (223 aa)) enclose the TRUD domain.

Belongs to the pseudouridine synthase TruD family.

The enzyme catalyses uridine(13) in tRNA = pseudouridine(13) in tRNA. Its function is as follows. Could be responsible for synthesis of pseudouridine from uracil-13 in transfer RNAs. This is Probable tRNA pseudouridine synthase D from Thermococcus sibiricus (strain DSM 12597 / MM 739).